Here is a 187-residue protein sequence, read N- to C-terminus: Resolvase OPG149 (187 aa).

The protein belongs to the RuvC family. Poxviruses-type subfamily. Mg(2+) is required as a cofactor.

Its function is as follows. Plays a role in DNA replication by cleaving viral DNA concatamers to yield unit-length viral genomes. The concatamer junctions contain inverted repeat sequences that can be extruded as cruciforms, yielding Holliday junctions that A22 protein cleaves. The polypeptide is Resolvase OPG149 (OPG149) (Variola virus (isolate Human/India/Ind3/1967) (VARV)).